The primary structure comprises 685 residues: Galactocerebrosidase (685 aa).

A signal peptide spans 1 to 42; the sequence is MAEWLLSASWQRRAKAMTAAAGSAGRAAVPLLLCALLAPGGA. Threonine 109 is a substrate binding site. A glycan (N-linked (GlcNAc...) asparagine) is linked at asparagine 143. Substrate is bound by residues tryptophan 151 and asparagine 197. Residue glutamate 198 is the Proton donor/acceptor of the active site. Glutamate 274 serves as the catalytic Nucleophile. The cysteines at positions 287 and 394 are disulfide-linked. An N-linked (GlcNAc...) asparagine glycan is attached at asparagine 379. Arginine 396 provides a ligand contact to substrate. Asparagine 403, asparagine 556, asparagine 559, and asparagine 602 each carry an N-linked (GlcNAc...) asparagine glycan.

The protein belongs to the glycosyl hydrolase 59 family. Detected in urine. Detected in testis, brain and placenta (at protein level). Detected in kidney and liver.

Its subcellular location is the lysosome. It carries out the reaction a beta-D-galactosyl-(1&lt;-&gt;1')-N-acylsphing-4-enine + H2O = an N-acylsphing-4-enine + D-galactose. It catalyses the reaction beta-D-galactosyl-(1&lt;-&gt;1)-sphing-4-enine + H2O = sphing-4-enine + D-galactose. The enzyme catalyses a D-galactosylceramide + H2O = an N-acyl-sphingoid base + D-galactose. Hydrolyzes the galactose ester bonds of glycolipids such as galactosylceramide and galactosylsphingosine. Enzyme with very low activity responsible for the lysosomal catabolism of galactosylceramide, a major lipid in myelin, kidney and epithelial cells of small intestine and colon. This chain is Galactocerebrosidase, found in Homo sapiens (Human).